The chain runs to 621 residues: Glutamyl-tRNA(Gln) amidotransferase subunit E (621 aa).

This sequence belongs to the GatB/GatE family. GatE subfamily. As to quaternary structure, heterodimer of GatD and GatE.

The enzyme catalyses L-glutamyl-tRNA(Gln) + L-glutamine + ATP + H2O = L-glutaminyl-tRNA(Gln) + L-glutamate + ADP + phosphate + H(+). Allows the formation of correctly charged Gln-tRNA(Gln) through the transamidation of misacylated Glu-tRNA(Gln) in organisms which lack glutaminyl-tRNA synthetase. The reaction takes place in the presence of glutamine and ATP through an activated gamma-phospho-Glu-tRNA(Gln). The GatDE system is specific for glutamate and does not act on aspartate. This is Glutamyl-tRNA(Gln) amidotransferase subunit E from Methanobrevibacter smithii (strain ATCC 35061 / DSM 861 / OCM 144 / PS).